A 393-amino-acid polypeptide reads, in one-letter code: 4-hydroxyphenylpyruvate dioxygenase (393 aa).

N-acetylthreonine is present on T2. 2 consecutive VOC domains span residues 18–149 and 180–338; these read HFHS…LVEK and IIDH…IFTK. K132 is modified (N6-succinyllysine). Fe cation is bound at residue H183. 3 positions are modified to phosphoserine: S211, S226, and S250. Fe cation is bound by residues H266 and E349.

The protein belongs to the 4HPPD family. In terms of assembly, homodimer. Fe cation serves as cofactor.

The protein resides in the cytoplasm. The protein localises to the endoplasmic reticulum membrane. Its subcellular location is the golgi apparatus membrane. It catalyses the reaction 3-(4-hydroxyphenyl)pyruvate + O2 = homogentisate + CO2. It participates in amino-acid degradation; L-phenylalanine degradation; acetoacetate and fumarate from L-phenylalanine: step 3/6. Functionally, catalyzes the conversion of 4-hydroxyphenylpyruvic acid to homogentisic acid, one of the steps in tyrosine catabolism. In Bos taurus (Bovine), this protein is 4-hydroxyphenylpyruvate dioxygenase (HPD).